The following is a 383-amino-acid chain: Proton extrusion protein PxcA (383 aa).

4 helical membrane passes run 163–183, 258–278, 306–326, and 341–361; these read ILLL…AYII, AVKN…VCFA, IILF…TVLL, and FVML…KYWI.

Belongs to the CemA family.

It is found in the cell inner membrane. Required for H(+) efflux immediately after light irradiation to form a rapid H(+) concentration gradient across the thylakoid membranes. Together with PxcL, contributes to transient H(+) uptake following dark to light transition. The polypeptide is Proton extrusion protein PxcA (Synechococcus sp. (strain CC9902)).